The sequence spans 1582 residues: Dynein axonemal assembly factor 1 homolog (1582 aa).

LRR repeat units follow at residues 38-60, 61-82, 83-104, 105-126, 129-150, and 154-175; these read RLND…DEYT, ELKS…TKLT, KLKC…EFNR, ELDT…GTDI, VLNT…AALV, and TLSV…KIFE. The 39-residue stretch at 189–227 folds into the LRRCT domain; the sequence is PVVSRLPQYRKTLILACKELTYLDSRPVFPRDRACAEAW. Disordered regions lie at residues 245-420, 560-587, 859-878, 913-942, 1073-1092, 1101-1137, 1150-1218, 1305-1345, 1358-1438, 1484-1517, and 1529-1548; these read AERR…SEMD, SSDV…VKSQ, FSKD…EDRR, DTGE…DDDA, SSNE…LVER, MQRM…MGEG, TEII…QAEG, KDNE…TAKD, LDPE…PYQT, EDSK…NPKN, and PSES…STEQ. Low complexity predominate over residues 313-327; that stretch reads ESQASEHSTTSSTSA. The span at 339–392 shows a compositional bias: basic and acidic residues; the sequence is HIAERISNRRVKPLEGRPKVLYDEAASGDEKAVTTTDSKKDSNAEDLPELKDIT. A compositionally biased stretch (polar residues) spans 409–420; it reads TLLQSDSGSEMD. The span at 572-582 shows a compositional bias: acidic residues; it reads ESDEEPTEEEM. Residues 928 to 942 are compositionally biased toward acidic residues; it reads SDSESEKEVEEDDDA. Composition is skewed to basic and acidic residues over residues 1078–1092 and 1103–1125; these read LEAK…LVER and RMKE…KEEE. Over residues 1166-1178 the composition is skewed to low complexity; that stretch reads EGGAQQEEGGAQS. Basic and acidic residues-rich tracts occupy residues 1321–1335, 1398–1427, and 1484–1514; these read PKEE…ETET, SALK…KDTE, and EDSK…RPEN. Positions 1529–1540 are enriched in acidic residues; that stretch reads PSESLEDTEATE.

The protein belongs to the DNAAF1 family.

The protein localises to the cell projection. Its subcellular location is the cilium. Its function is as follows. Cilium-specific protein required for cilia structures. This is Dynein axonemal assembly factor 1 homolog (dtr) from Drosophila pseudoobscura pseudoobscura (Fruit fly).